A 336-amino-acid polypeptide reads, in one-letter code: Abasic site processing protein HMCES (336 aa).

The active-site Nucleophile is cysteine 2. Cysteine 2 is modified (thiazolidine linkage to a ring-opened DNA abasic site). Residues 26 to 51 are disordered; sequence RQKCPKWRDGDTDKYQPSYNKSPQSN. A compositionally biased stretch (polar residues) spans 40-51; it reads YQPSYNKSPQSN. Residue glutamate 129 is part of the active site. Positions 285 to 336 are disordered; that stretch reads QNKSPKKEESRSIIQSPKLSQFGAPPKKTSAGLMQQWLKKEDGEPSPKRAKK. Basic and acidic residues predominate over residues 322–336; that stretch reads LKKEDGEPSPKRAKK.

It belongs to the SOS response-associated peptidase family. Post-translationally, ubiquitination of the hmces DNA-protein cross-link by rfwd3 may promotes its degradation.

The protein resides in the chromosome. With respect to regulation, formation and reversal of DNA-protein cross-link depends on DNA context. Catalyzes formation of the thiazolidine linkage in presence of abasic sites in single-stranded DNA. Mediates the reversal of the thiazolidine cross-link in presence of double stranded DNA. In terms of biological role, sensor of abasic sites in single-stranded DNA (ssDNA) required to preserve genome integrity by promoting error-free repair of abasic sites. Acts as an enzyme that recognizes and binds abasic sites in ssDNA at replication forks and chemically modifies the lesion by forming a covalent cross-link with DNA: forms a stable thiazolidine linkage between a ring-opened abasic site and the alpha-amino and sulfhydryl substituents of its N-terminal catalytic cysteine residue. The hmces DNA-protein cross-link is then either reversed or degraded. Hmces is able to catalyze the reversal of its thiazolidine cross-link and cycle between a cross-link and a non-cross-linked state depending on DNA context: mediates self-reversal of the thiazolidine cross-link in double stranded DNA, allowing apex1 to initiate downstream repair of abasic sites. The hmces DNA-protein cross-link can also be degraded by the sprtn metalloprotease following unfolding by the brip1/fancj helicase. Promotes error-free repair of abasic sites by protecting abasic sites from translesion synthesis (TLS) polymerases and endonucleases that are error-prone and would generate mutations and double-strand breaks. Acts as a protease: mediates autocatalytic processing of its N-terminal methionine in order to expose the catalytic cysteine. The HMCES DNA-protein cross-link is then either reversed or degraded. According to a model, the HMCES DNA-protein cross-link. In Xenopus laevis (African clawed frog), this protein is Abasic site processing protein HMCES.